The sequence spans 303 residues: Porphobilinogen deaminase (303 aa).

An S-(dipyrrolylmethanemethyl)cysteine modification is found at Cys240.

Belongs to the HMBS family. As to quaternary structure, monomer. Dipyrromethane is required as a cofactor.

It carries out the reaction 4 porphobilinogen + H2O = hydroxymethylbilane + 4 NH4(+). The protein operates within porphyrin-containing compound metabolism; protoporphyrin-IX biosynthesis; coproporphyrinogen-III from 5-aminolevulinate: step 2/4. Functionally, tetrapolymerization of the monopyrrole PBG into the hydroxymethylbilane pre-uroporphyrinogen in several discrete steps. The protein is Porphobilinogen deaminase of Stenotrophomonas maltophilia (strain K279a).